Here is a 305-residue protein sequence, read N- to C-terminus: tRNA pseudouridine synthase B (305 aa).

Residue Asp39 is the Nucleophile of the active site. Residues 237–305 (LPVIIVPGEF…FLLKPHKVLK (69 aa)) enclose the PUA domain.

It belongs to the pseudouridine synthase TruB family. Type 1 subfamily.

The enzyme catalyses uridine(55) in tRNA = pseudouridine(55) in tRNA. In terms of biological role, responsible for synthesis of pseudouridine from uracil-55 in the psi GC loop of transfer RNAs. The protein is tRNA pseudouridine synthase B of Moorella thermoacetica (strain ATCC 39073 / JCM 9320).